A 208-amino-acid polypeptide reads, in one-letter code: Small ribosomal subunit protein eS8 (208 aa).

The disordered stretch occupies residues 1-40 (MGISRDNWHKRRKTGGKRKPVHKKRKYELGRPPSNTKLGP). Residues 8–26 (WHKRRKTGGKRKPVHKKRK) are compositionally biased toward basic residues.

This sequence belongs to the eukaryotic ribosomal protein eS8 family. Component of the small ribosomal subunit.

The protein localises to the cytoplasm. In terms of biological role, component of the small ribosomal subunit. The ribosome is a large ribonucleoprotein complex responsible for the synthesis of proteins in the cell. In Ictalurus punctatus (Channel catfish), this protein is Small ribosomal subunit protein eS8 (rps8).